A 54-amino-acid polypeptide reads, in one-letter code: Ribulose bisphosphate carboxylase large chain (54 aa).

The propeptide occupies 1–2 (MS). N-acetylproline is present on Pro3. Position 14 is an N6,N6,N6-trimethyllysine (Lys14).

This sequence belongs to the RuBisCO large chain family. Type I subfamily. Heterohexadecamer of 8 large chains and 8 small chains.

The protein resides in the plastid. It localises to the chloroplast. It carries out the reaction 2 (2R)-3-phosphoglycerate + 2 H(+) = D-ribulose 1,5-bisphosphate + CO2 + H2O. It catalyses the reaction D-ribulose 1,5-bisphosphate + O2 = 2-phosphoglycolate + (2R)-3-phosphoglycerate + 2 H(+). RuBisCO catalyzes two reactions: the carboxylation of D-ribulose 1,5-bisphosphate, the primary event in carbon dioxide fixation, as well as the oxidative fragmentation of the pentose substrate in the photorespiration process. Both reactions occur simultaneously and in competition at the same active site. This is Ribulose bisphosphate carboxylase large chain (rbcL) from Icacina mannii.